The sequence spans 126 residues: Large ribosomal subunit protein bL17 (126 aa).

It belongs to the bacterial ribosomal protein bL17 family. In terms of assembly, part of the 50S ribosomal subunit. Contacts protein L32.

The protein is Large ribosomal subunit protein bL17 of Vibrio atlanticus (strain LGP32) (Vibrio splendidus (strain Mel32)).